The sequence spans 838 residues: G-protein coupled receptor-associated sorting protein 2 (838 aa).

Disordered regions lie at residues 1-121 (MTGA…PGAR), 218-293 (ASNE…NPFS), and 531-552 (LELS…PSPE). Residues 13-31 (KPEKKAGEEVVAGPEREND) are compositionally biased toward basic and acidic residues. The span at 220–235 (NESGFWSADETSTASS) shows a compositional bias: polar residues. Residues 255 to 271 (RSRHRAKHQTNPRSRPR) show a composition bias toward basic residues. 2 positions are modified to phosphoserine: Ser-282 and Ser-284. The span at 542–552 (SLLQPDQPSPE) shows a compositional bias: polar residues.

The protein belongs to the GPRASP family. In terms of assembly, interacts with cytoplasmic tails of a variety of G protein-coupled receptors such as muscarinic acetylcholine receptor M1/CHRM1 and calcitonin receptor/CALCR.

May play a role in regulation of a variety of G-protein coupled receptors. This Pongo abelii (Sumatran orangutan) protein is G-protein coupled receptor-associated sorting protein 2 (GPRASP2).